The primary structure comprises 696 residues: UV radiation resistance-associated gene protein (696 aa).

Ser214 and Ser218 each carry phosphoserine. 2 coiled-coil regions span residues 251–278 (LLTL…IARL) and 330–394 (NAQQ…RLEL). Ser666 is subject to Phosphoserine. The interval 666 to 696 (SYSDGEDEFRPRLEHNYSNSDSNITLQTERS) is disordered. A Phosphotyrosine modification is found at Tyr667. Phosphoserine occurs at positions 668 and 685. The segment covering 681-696 (NYSNSDSNITLQTERS) has biased composition (polar residues).

Its function is as follows. Involved in biosynthetic vesicle transport to lysosomes. Acts as a cell growth regulator. Also has a crucial role in controlling organ rotation by regulating membrane-localized Notch receptor endocytosis and subsequent degradation. Regulation of organ rotation is not by induction of autophagy. The polypeptide is UV radiation resistance-associated gene protein (Uvrag) (Drosophila melanogaster (Fruit fly)).